A 213-amino-acid chain; its full sequence is MKPRACVVVYPGSNCDRDAYHALEINGFEPSYVGLDDKLDDYELIILPGGFSYGDYLRPGAVAAREKIAFEIAKAAERGKLIMGICNGFQILIEMGLLKGALLQNSSGKFICKWVDLIVENNDTPFTNAFEKGEKIRIPIAHGFGRYVKIDDVNVVLRYVKDVNGSDERIAGVLNESGNVFGLMPHPERAVEELIGGEDGKKVFQSILNYLKR.

The Glutamine amidotransferase type-1 domain maps to 5–213 (ACVVVYPGSN…FQSILNYLKR (209 aa)). The Nucleophile role is filled by cysteine 86. Active-site residues include histidine 186 and glutamate 188.

In terms of assembly, part of the FGAM synthase complex composed of 1 PurL, 1 PurQ and 2 PurS subunits.

It localises to the cytoplasm. The catalysed reaction is N(2)-formyl-N(1)-(5-phospho-beta-D-ribosyl)glycinamide + L-glutamine + ATP + H2O = 2-formamido-N(1)-(5-O-phospho-beta-D-ribosyl)acetamidine + L-glutamate + ADP + phosphate + H(+). It carries out the reaction L-glutamine + H2O = L-glutamate + NH4(+). The protein operates within purine metabolism; IMP biosynthesis via de novo pathway; 5-amino-1-(5-phospho-D-ribosyl)imidazole from N(2)-formyl-N(1)-(5-phospho-D-ribosyl)glycinamide: step 1/2. In terms of biological role, part of the phosphoribosylformylglycinamidine synthase complex involved in the purines biosynthetic pathway. Catalyzes the ATP-dependent conversion of formylglycinamide ribonucleotide (FGAR) and glutamine to yield formylglycinamidine ribonucleotide (FGAM) and glutamate. The FGAM synthase complex is composed of three subunits. PurQ produces an ammonia molecule by converting glutamine to glutamate. PurL transfers the ammonia molecule to FGAR to form FGAM in an ATP-dependent manner. PurS interacts with PurQ and PurL and is thought to assist in the transfer of the ammonia molecule from PurQ to PurL. In Thermotoga maritima (strain ATCC 43589 / DSM 3109 / JCM 10099 / NBRC 100826 / MSB8), this protein is Phosphoribosylformylglycinamidine synthase subunit PurQ.